A 101-amino-acid chain; its full sequence is MIPGEILPADGDIELNAGRATLTLSVTNTGDRPIQVGSHYHFAETNAALAFDRAAARGFRLNIAAGTAVRFEPGQARTVELVALAGARKVYGFNGDVMGAL.

It belongs to the urease beta subunit family. As to quaternary structure, heterotrimer of UreA (gamma), UreB (beta) and UreC (alpha) subunits. Three heterotrimers associate to form the active enzyme.

It localises to the cytoplasm. It catalyses the reaction urea + 2 H2O + H(+) = hydrogencarbonate + 2 NH4(+). Its pathway is nitrogen metabolism; urea degradation; CO(2) and NH(3) from urea (urease route): step 1/1. This is Urease subunit beta from Azoarcus sp. (strain BH72).